A 301-amino-acid polypeptide reads, in one-letter code: Ribonuclease Z (301 aa).

Zn(2+) contacts are provided by His63, His65, Asp67, His68, His141, Asp204, and His262. Asp67 (proton acceptor) is an active-site residue.

Belongs to the RNase Z family. Homodimer. Zn(2+) serves as cofactor.

It catalyses the reaction Endonucleolytic cleavage of RNA, removing extra 3' nucleotides from tRNA precursor, generating 3' termini of tRNAs. A 3'-hydroxy group is left at the tRNA terminus and a 5'-phosphoryl group is left at the trailer molecule.. Its function is as follows. Zinc phosphodiesterase, which displays some tRNA 3'-processing endonuclease activity. Probably involved in tRNA maturation, by removing a 3'-trailer from precursor tRNA. The sequence is that of Ribonuclease Z from Streptomyces coelicolor (strain ATCC BAA-471 / A3(2) / M145).